The following is a 230-amino-acid chain: Ureidoacrylate amidohydrolase RutB (230 aa).

The active-site Proton acceptor is the Asp24. Lys133 is an active-site residue. Catalysis depends on Cys166, which acts as the Nucleophile.

The protein belongs to the isochorismatase family. RutB subfamily.

The catalysed reaction is (Z)-3-ureidoacrylate + H2O + H(+) = (Z)-3-aminoacrylate + NH4(+) + CO2. It carries out the reaction (Z)-3-ureidoacrylate + H2O = (Z)-3-aminoacrylate + carbamate + H(+). It catalyses the reaction (Z)-2-methylureidoacrylate + H2O + H(+) = (Z)-2-methylaminoacrylate + NH4(+) + CO2. Functionally, hydrolyzes ureidoacrylate to form aminoacrylate and carbamate. The carbamate hydrolyzes spontaneously, thereby releasing one of the nitrogen atoms of the pyrimidine ring as ammonia and one of its carbon atoms as CO2. The chain is Ureidoacrylate amidohydrolase RutB from Escherichia coli O127:H6 (strain E2348/69 / EPEC).